Consider the following 355-residue polypeptide: MSGTGFRYGLNVMKKKKPNESSNRITFTEDDSSSSEQEHAPIPNSFSSQITAASDASKDDNYDASIYGFDEFYDSMKSAEREQMELKRLESKDRRPKYMENLIESAKKRKRDLLLARERALLKKNELEGDDATEKFVTSSYKKHREEVQKAIEDRKEEDEKSITDTTTGMKDFYASMLDRQEKIHQAAVEGVQNSKKTGAEIGDAMKGQDTLGSDNLILEAKKKGLKLELNDNNEIVDQRQILTAGLNIRKSSANNSMRDDKKRNHKSSYKRSLSPSTRYHQDRPDKRHGTYSLEEIDKQRKEFENRQRLQKEKEFQKSREAALKIHASRNTTETQVQSARERYLQRKKKAATNP.

Residues 1–57 (MSGTGFRYGLNVMKKKKPNESSNRITFTEDDSSSSEQEHAPIPNSFSSQITAASDAS) are disordered. The segment covering 44-54 (NSFSSQITAAS) has biased composition (polar residues). A coiled-coil region spans residues 99 to 162 (MENLIESAKK…EDRKEEDEKS (64 aa)). 2 disordered regions span residues 253-292 (SANN…HGTY) and 325-355 (KIHA…ATNP). Basic and acidic residues predominate over residues 280 to 289 (YHQDRPDKRH). A coiled-coil region spans residues 293–326 (SLEEIDKQRKEFENRQRLQKEKEFQKSREAALKI). Polar residues predominate over residues 329–339 (SRNTTETQVQS). The segment covering 346 to 355 (QRKKKAATNP) has biased composition (basic residues).

This sequence belongs to the NSRP1 family.

In Schizosaccharomyces pombe (strain 972 / ATCC 24843) (Fission yeast), this protein is Nuclear speckle splicing regulatory protein 1 homolog.